Here is a 272-residue protein sequence, read N- to C-terminus: Glutamate racemase (272 aa).

Substrate contacts are provided by residues 9 to 10 (DS) and 41 to 42 (YG). Cysteine 73 functions as the Proton donor/acceptor in the catalytic mechanism. Position 74–75 (74–75 (NT)) interacts with substrate. Catalysis depends on cysteine 183, which acts as the Proton donor/acceptor. 184–185 (TH) contacts substrate.

The protein belongs to the aspartate/glutamate racemases family.

The enzyme catalyses L-glutamate = D-glutamate. It functions in the pathway cell wall biogenesis; peptidoglycan biosynthesis. Provides the (R)-glutamate required for cell wall biosynthesis. The sequence is that of Glutamate racemase from Shewanella sp. (strain MR-4).